The following is a 212-amino-acid chain: Imidazole glycerol phosphate synthase subunit HisH 2 (212 aa).

A Glutamine amidotransferase type-1 domain is found at histidine 4 to isoleucine 211. Cysteine 82 acts as the Nucleophile in catalysis. Residues histidine 186 and glutamate 188 contribute to the active site.

As to quaternary structure, heterodimer of HisH and HisF.

It is found in the cytoplasm. The enzyme catalyses 5-[(5-phospho-1-deoxy-D-ribulos-1-ylimino)methylamino]-1-(5-phospho-beta-D-ribosyl)imidazole-4-carboxamide + L-glutamine = D-erythro-1-(imidazol-4-yl)glycerol 3-phosphate + 5-amino-1-(5-phospho-beta-D-ribosyl)imidazole-4-carboxamide + L-glutamate + H(+). It carries out the reaction L-glutamine + H2O = L-glutamate + NH4(+). Its pathway is amino-acid biosynthesis; L-histidine biosynthesis; L-histidine from 5-phospho-alpha-D-ribose 1-diphosphate: step 5/9. In terms of biological role, IGPS catalyzes the conversion of PRFAR and glutamine to IGP, AICAR and glutamate. The HisH subunit provides the glutamine amidotransferase activity that produces the ammonia necessary to HisF for the synthesis of IGP and AICAR. In Parasynechococcus marenigrum (strain WH8102), this protein is Imidazole glycerol phosphate synthase subunit HisH 2 (hisH2).